The primary structure comprises 334 residues: WD repeat-containing protein 54 (334 aa).

WD repeat units lie at residues Gly-162–Thr-206, Ile-208–Gln-247, and Ala-250–Tyr-289.

Homodimer and homotrimer; forms tight forms of dimers and trimers. Interacts with IZUMO1 and IZUMO1R/JUNO. In terms of processing, cross-linked to tightly form both dimers and trimers by TGM2. Cross-linking enhances the activation of EGF receptor-mediated signaling pathway. Cross-linking is inhibited by EGF. Post-translationally, ubiquitinated. EGF increases ubiquitination. In terms of tissue distribution, expressed in epithelial cells (at protein level). Isoform 3 expression is highly increased in colorectal cancer cells.

The protein localises to the vesicle. It is found in the cytoplasm. The protein resides in the cell membrane. In terms of biological role, plays a role in the adhesion and fusion of the sperm-oocyte membrane through its interactions with IZUMO1 and IZUMO1R/JUNO. When cross-linked to form dimers and trimers, it has a regulatory effect on ERK signaling pathway activity in response to EGF stimulation. Colocalizes with the EGF receptor in WDR54-specific vesicle where it sustains the internalization and controls the degradation of the EGF receptor after EGF stimulation. The sequence is that of WD repeat-containing protein 54 from Homo sapiens (Human).